Consider the following 851-residue polypeptide: Leucine--tRNA ligase (851 aa).

The 'HIGH' region motif lies at 51-61 (PYPSGDLHMGH). The short motif at 615–619 (KMSKS) is the 'KMSKS' region element. Lys-618 serves as a coordination point for ATP.

This sequence belongs to the class-I aminoacyl-tRNA synthetase family.

Its subcellular location is the cytoplasm. It catalyses the reaction tRNA(Leu) + L-leucine + ATP = L-leucyl-tRNA(Leu) + AMP + diphosphate. In Clavibacter michiganensis subsp. michiganensis (strain NCPPB 382), this protein is Leucine--tRNA ligase.